Reading from the N-terminus, the 368-residue chain is tRNA-specific 2-thiouridylase MnmA (368 aa).

ATP is bound by residues 11–18 (GMSGGVDS) and M37. The interval 97–99 (NPD) is interaction with target base in tRNA. The active-site Nucleophile is C102. Cysteines 102 and 199 form a disulfide. ATP is bound at residue G127. The interaction with tRNA stretch occupies residues 149 to 151 (KDQ). C199 serves as the catalytic Cysteine persulfide intermediate. The segment at 311–312 (RY) is interaction with tRNA.

Belongs to the MnmA/TRMU family. Interacts with TusE.

It is found in the cytoplasm. It carries out the reaction S-sulfanyl-L-cysteinyl-[protein] + uridine(34) in tRNA + AH2 + ATP = 2-thiouridine(34) in tRNA + L-cysteinyl-[protein] + A + AMP + diphosphate + H(+). Its function is as follows. Catalyzes the 2-thiolation of uridine at the wobble position (U34) of tRNA(Lys), tRNA(Glu) and tRNA(Gln), leading to the formation of s(2)U34, the first step of tRNA-mnm(5)s(2)U34 synthesis. Sulfur is provided by IscS, via a sulfur-relay system. Binds ATP and its substrate tRNAs. This Klebsiella pneumoniae (strain 342) protein is tRNA-specific 2-thiouridylase MnmA.